The sequence spans 198 residues: Na(+)-translocating NADH-quinone reductase subunit E (198 aa).

The next 6 helical transmembrane spans lie at 11-31, 39-59, 77-97, 110-130, 140-160, and 176-196; these read SIFI…FLAV, FGLG…NNLV, FLNF…LEMV, GIFL…SFMV, IVYG…LAGI, and LGIT…FSGV.

It belongs to the NqrDE/RnfAE family. Composed of six subunits; NqrA, NqrB, NqrC, NqrD, NqrE and NqrF. In terms of processing, the N-terminus is blocked.

Its subcellular location is the cell inner membrane. The enzyme catalyses a ubiquinone + n Na(+)(in) + NADH + H(+) = a ubiquinol + n Na(+)(out) + NAD(+). This reaction is tightly coupled to the Na(+) pumping activity and specifically requires Na(+) for activity. Inhibited by korormicin and 2-N-heptyl-4-hydroxyquinoline N-oxide (HQNO). NQR complex catalyzes the reduction of ubiquinone-1 to ubiquinol by two successive reactions, coupled with the transport of Na(+) ions from the cytoplasm to the periplasm. NqrA to NqrE are probably involved in the second step, the conversion of ubisemiquinone to ubiquinol. This Vibrio alginolyticus protein is Na(+)-translocating NADH-quinone reductase subunit E.